A 344-amino-acid chain; its full sequence is Acireductone dioxygenase (344 aa).

4 residues coordinate Fe(2+): His-92, His-94, Glu-98, and His-137. Ni(2+) contacts are provided by His-92, His-94, Glu-98, and His-137.

It belongs to the acireductone dioxygenase (ARD) family. It depends on Fe(2+) as a cofactor. Requires Ni(2+) as cofactor.

The protein resides in the cytoplasm. Its subcellular location is the nucleus. It catalyses the reaction 1,2-dihydroxy-5-(methylsulfanyl)pent-1-en-3-one + O2 = 4-methylsulfanyl-2-oxobutanoate + formate + 2 H(+). The catalysed reaction is 1,2-dihydroxy-5-(methylsulfanyl)pent-1-en-3-one + O2 = 3-(methylsulfanyl)propanoate + CO + formate + 2 H(+). It functions in the pathway amino-acid biosynthesis; L-methionine biosynthesis via salvage pathway; L-methionine from S-methyl-5-thio-alpha-D-ribose 1-phosphate: step 5/6. Its function is as follows. Catalyzes 2 different reactions between oxygen and the acireductone 1,2-dihydroxy-3-keto-5-methylthiopentene (DHK-MTPene) depending upon the metal bound in the active site. Fe-containing acireductone dioxygenase (Fe-ARD) produces formate and 2-keto-4-methylthiobutyrate (KMTB), the alpha-ketoacid precursor of methionine in the methionine recycle pathway. Ni-containing acireductone dioxygenase (Ni-ARD) produces methylthiopropionate, carbon monoxide and formate, and does not lie on the methionine recycle pathway. This is Acireductone dioxygenase from Leishmania infantum.